Consider the following 64-residue polypeptide: Large ribosomal subunit protein bL35 (64 aa).

The protein belongs to the bacterial ribosomal protein bL35 family.

This is Large ribosomal subunit protein bL35 from Coxiella burnetii (strain RSA 493 / Nine Mile phase I).